We begin with the raw amino-acid sequence, 326 residues long: 4-hydroxy-3-methylbut-2-enyl diphosphate reductase 1 (326 aa).

C27 is a [4Fe-4S] cluster binding site. Positions 56 and 89 each coordinate (2E)-4-hydroxy-3-methylbut-2-enyl diphosphate. Positions 56 and 89 each coordinate dimethylallyl diphosphate. Residues H56 and H89 each coordinate isopentenyl diphosphate. C111 lines the [4Fe-4S] cluster pocket. H139 contributes to the (2E)-4-hydroxy-3-methylbut-2-enyl diphosphate binding site. H139 is a dimethylallyl diphosphate binding site. H139 is an isopentenyl diphosphate binding site. Catalysis depends on E141, which acts as the Proton donor. T179 serves as a coordination point for (2E)-4-hydroxy-3-methylbut-2-enyl diphosphate. C209 is a binding site for [4Fe-4S] cluster. (2E)-4-hydroxy-3-methylbut-2-enyl diphosphate-binding residues include S237, S238, N239, and S281. Positions 237, 238, 239, and 281 each coordinate dimethylallyl diphosphate. Isopentenyl diphosphate-binding residues include S237, S238, N239, and S281.

Belongs to the IspH family. [4Fe-4S] cluster is required as a cofactor.

The catalysed reaction is isopentenyl diphosphate + 2 oxidized [2Fe-2S]-[ferredoxin] + H2O = (2E)-4-hydroxy-3-methylbut-2-enyl diphosphate + 2 reduced [2Fe-2S]-[ferredoxin] + 2 H(+). It catalyses the reaction dimethylallyl diphosphate + 2 oxidized [2Fe-2S]-[ferredoxin] + H2O = (2E)-4-hydroxy-3-methylbut-2-enyl diphosphate + 2 reduced [2Fe-2S]-[ferredoxin] + 2 H(+). It participates in isoprenoid biosynthesis; dimethylallyl diphosphate biosynthesis; dimethylallyl diphosphate from (2E)-4-hydroxy-3-methylbutenyl diphosphate: step 1/1. It functions in the pathway isoprenoid biosynthesis; isopentenyl diphosphate biosynthesis via DXP pathway; isopentenyl diphosphate from 1-deoxy-D-xylulose 5-phosphate: step 6/6. Functionally, catalyzes the conversion of 1-hydroxy-2-methyl-2-(E)-butenyl 4-diphosphate (HMBPP) into a mixture of isopentenyl diphosphate (IPP) and dimethylallyl diphosphate (DMAPP). Acts in the terminal step of the DOXP/MEP pathway for isoprenoid precursor biosynthesis. The chain is 4-hydroxy-3-methylbut-2-enyl diphosphate reductase 1 from Burkholderia pseudomallei (strain K96243).